A 200-amino-acid chain; its full sequence is Superoxide dismutase [Mn], mitochondrial (200 aa).

Positions 27, 72, 157, and 161 each coordinate Mn(2+).

Belongs to the iron/manganese superoxide dismutase family. Mn(2+) is required as a cofactor.

The protein localises to the mitochondrion matrix. It catalyses the reaction 2 superoxide + 2 H(+) = H2O2 + O2. Functionally, destroys superoxide anion radicals which are normally produced within the cells and which are toxic to biological systems. The polypeptide is Superoxide dismutase [Mn], mitochondrial (sod) (Agaricus bisporus (White button mushroom)).